The following is a 434-amino-acid chain: Putative D-alanyl-D-alanine carboxypeptidase (434 aa).

The helical; Signal-anchor transmembrane segment at 7–25 threads the bilayer; the sequence is YLSLLAVSCSVSAAKYPVL.

Belongs to the peptidase S12 family. YfeW subfamily.

It localises to the cell inner membrane. It carries out the reaction Preferential cleavage: (Ac)2-L-Lys-D-Ala-|-D-Ala. Also transpeptidation of peptidyl-alanyl moieties that are N-acyl substituents of D-alanine.. Functionally, penicillin-binding protein. Has low DD-carboxypeptidase activity. This is Putative D-alanyl-D-alanine carboxypeptidase from Escherichia coli (strain K12).